A 440-amino-acid polypeptide reads, in one-letter code: Xaa-Pro dipeptidase (440 aa).

5 residues coordinate Mn(2+): D244, D255, H335, E380, and E419.

Belongs to the peptidase M24B family. Bacterial-type prolidase subfamily. Mn(2+) is required as a cofactor.

It carries out the reaction Xaa-L-Pro dipeptide + H2O = an L-alpha-amino acid + L-proline. Functionally, splits dipeptides with a prolyl residue in the C-terminal position. The sequence is that of Xaa-Pro dipeptidase from Shewanella baltica (strain OS223).